Here is a 212-residue protein sequence, read N- to C-terminus: MEGEPASREEGEAVNASGAAAASAFRESAQQMSNERGFENVELGVIGKKKKVPRRVIHFVSGETMEEYSTDEDEVDSLEKKDVLPPVDPTKLTWGPYLWFHMLRAATSTLSVCDFLGEKIASVLGISTPKYQYAIDEYYRMKKEEEEEEEENRMSEEAERQYQQNKLQADSVVQSDQPETLASSSFVNLNFEMEGDCEVITESKQNPVSVPL.

Residue methionine 1 is modified to N-acetylmethionine. Residues 1–11 show a composition bias toward basic and acidic residues; that stretch reads MEGEPASREEG. The interval 1 to 33 is disordered; it reads MEGEPASREEGEAVNASGAAAASAFRESAQQMS. A compositionally biased stretch (low complexity) spans 13-29; that stretch reads AVNASGAAAASAFRESA. The residue at position 69 (serine 69) is a Phosphoserine. Phosphothreonine is present on threonine 70. Residues 135–172 adopt a coiled-coil conformation; the sequence is IDEYYRMKKEEEEEEEENRMSEEAERQYQQNKLQADSV. A disordered region spans residues 146–179; that stretch reads EEEEEENRMSEEAERQYQQNKLQADSVVQSDQPE. The segment covering 161–179 has biased composition (polar residues); that stretch reads QYQQNKLQADSVVQSDQPE.

Belongs to the FAM177 family.

This chain is Protein FAM177A1 (FAM177A1), found in Bos taurus (Bovine).